Here is a 92-residue protein sequence, read N- to C-terminus: Dynein light chain 1, cytoplasmic (92 aa).

It belongs to the dynein light chain family. In terms of assembly, homodimer. Cytoplasmic dynein consists of two catalytic heavy chains (HCs) and a number of non-catalytic subunits which present intermediate chains (ICs), light intermediate chains (LICs) and light chains (LCs). Component of the nuclear pore complex (NPC). NPC constitutes the exclusive means of nucleocytoplasmic transport. NPCs allow the passive diffusion of ions and small molecules and the active, nuclear transport receptor-mediated bidirectional transport of macromolecules such as proteins, RNAs, ribonucleoparticles (RNPs), and ribosomal subunits across the nuclear envelope. Due to its 8-fold rotational symmetry, all subunits are present with 8 copies or multiples thereof. Part of the NUP82 subcomplex. In the complex, interacts directly with Nup159.

It localises to the cytoplasm. Its subcellular location is the cytoskeleton. It is found in the nucleus. The protein resides in the nuclear pore complex. Acts as one of several non-catalytic accessory components of the cytoplasmic dynein complex that are thought to be involved in linking dynein to cargos and to adapter proteins that regulate dynein function. Cytoplasmic dynein 1 acts as a motor for the intracellular retrograde motility of vesicles and organelles along microtubules. May play a role in changing or maintaining the spatial distribution of cytoskeletal structures. Also a component of the nuclear pore complex where it may contribute to the stable association of the Nup82 subcomplex with the NPC. This is Dynein light chain 1, cytoplasmic (DYN2) from Saccharomyces cerevisiae (strain ATCC 204508 / S288c) (Baker's yeast).